Here is a 96-residue protein sequence, read N- to C-terminus: Conglutin delta 4 (96 aa).

Positions 1 to 22 (MARLTILIAFVAALVLVVHTSA) are cleaved as a signal peptide. 2 disulfides stabilise this stretch: Cys29/Cys78 and Cys80/Cys91.

Belongs to the 2S seed storage albumins family.

It localises to the endoplasmic reticulum. The sequence is that of Conglutin delta 4 from Lupinus angustifolius (Narrow-leaved blue lupine).